A 396-amino-acid polypeptide reads, in one-letter code: GDSL esterase/lipase ACHE (396 aa).

Positions 1–31 are cleaved as a signal peptide; the sequence is MATAATATAGSRAAVLLLLSLALALALRPSD. The Nucleophile role is filled by Ser49. Residues Asn108, Asn126, Asn151, Asn196, and Asn339 are each glycosylated (N-linked (GlcNAc...) asparagine). Catalysis depends on residues Asp359 and His362.

It belongs to the 'GDSL' lipolytic enzyme family.

It localises to the secreted. Its function is as follows. Esterase that can hydrolyze acetylthiocholine and propionylthiocholine in vitro. Substrate preference is propionylthiocholine &gt; acetylthiocholine. Possesses extremely low activity against butyrylthiocholine. The sequence is that of GDSL esterase/lipase ACHE from Zea mays (Maize).